The chain runs to 250 residues: Ribosomal RNA small subunit methyltransferase J (250 aa).

S-adenosyl-L-methionine contacts are provided by residues 101–102, 117–118, 153–154, and Asp-171; these read RD, ER, and SS.

This sequence belongs to the methyltransferase superfamily. RsmJ family.

The protein localises to the cytoplasm. It catalyses the reaction guanosine(1516) in 16S rRNA + S-adenosyl-L-methionine = N(2)-methylguanosine(1516) in 16S rRNA + S-adenosyl-L-homocysteine + H(+). Specifically methylates the guanosine in position 1516 of 16S rRNA. The sequence is that of Ribosomal RNA small subunit methyltransferase J from Shigella dysenteriae serotype 1 (strain Sd197).